A 446-amino-acid polypeptide reads, in one-letter code: Chromosomal replication initiator protein DnaA (446 aa).

Residues 1–82 (MENILDLWNQ…ELSIKFVIPQ (82 aa)) are domain I, interacts with DnaA modulators. A domain II region spans residues 83–103 (NQDVEDFMPKPQVKKAVKEDT). The domain III, AAA+ region stretch occupies residues 104-332 (SDFPQNMLNP…VAYSSLINKD (229 aa)). Positions 154, 155, 156, 157, and 158 each coordinate ATP. A Mg(2+)-binding site is contributed by Thr158. The Initiator specific motif (ISM) signature appears at 182-206 (SEKFTNEFINSIRDNKAVDFRNRYR). Positions 214 and 215 each coordinate Mg(2+). The tract at residues 333–346 (INADLAAEALKDII) is linker. Residues 347–446 (PSSKPKVITI…HVKEIKEQLK (100 aa)) are domain IV, binds dsDNA.

This sequence belongs to the DnaA family. As to quaternary structure, the DNA replisome assembles sequentially on oriC in this order; DnaA, DnaD, DnaB, DnaI-DnaC helicase. Oligomerizes as a right-handed, spiral filament on DNA at oriC. Forms an ATP-dependent helix on DNA at oriC; both DnaD and YabA inhibit formation of the DnaA helix. Forms an ATP-dependent oligomer, formation is stimulated by ds- and ssDNA; monomeric ADP-Soj inhibits oligomer formation. Interacts with DnaD. Interacts with YabA, and via YabA, with the replication machinery subunit beta sliding clamp DnaN. Interacts with YabA via domain IIIa (residues 109-275). Isolated domain I forms a 1:1 complex with SirA. Interacts with Soj, probably via domain III. Interacts via domains I and III with CcrZ. Interacts via domain IV with skin prophage-like element protein YqaH.

It localises to the cytoplasm. The protein resides in the nucleoid. The enzyme catalyses ATP + H2O = ADP + phosphate + H(+). Its activity is regulated as follows. Oligomerization of DnaA can be controlled by Soj; monomeric ADP-Soj inhibits formation of the DnaA helix. YabA prevents the cooperative binding of DnaA-ATP to oriC-containing sequences; increased levels of DnaN (beta sliding clamp subunit of DNA polymerase) removes YabA from association with DnaA on the chromosome, enabling increased association of DnaA with its chromosomal binding sites. Both Soj and YabA chase DnaA from oriC site, YabA tethers DnaA to the DNA replication fork via the beta sliding clamp subunit DnaN. SirA antagonizes the ability of DnaA to bind to the replication origin, and thus decreases replication inititation during sporulation. Small protein YqaH, part of the skin prophage-like element, binds to DnaA and antagonizes its replication initiation and transcriptional regulation activities. Its function is as follows. Plays an essential role in the initiation and regulation of chromosomal replication. ATP-DnaA binds to the origin of replication (oriC) to initiate formation of the DNA replication initiation complex once per cell cycle. Binds directly to oriC at a 9 bp consensus (DnaA box): 5'-TTATCCACA-3' and separates the double-stranded (ds)DNA. Forms a right-handed helical filament on oriC DNA; dsDNA binds to the exterior of the filament while single-stranded (ss)DNA is stabilized in the filament's interior. The ATP-DnaA-oriC complex binds and stabilizes one strand of the AT-rich DNA unwinding element (DUE or basal unwinding system, BUS), permitting loading of DNA polymerase. Binds ATP with high affinity, ADP with lower affinity, but not AMP, cAMP or cGMP; ATP stimulates binding to DnaA boxes. Once bound promotes sequence-specific strand separation of DnaA-trios (3'-GAT-5' consensus) adjacent to oriC in the presence of ATP but not ADP. Domains III and IV are sufficient to separate dsDNA strands. The 'initiator specific motif' (ISM) of domain III contacts the middle adenine residue of the DnaA-trio probably stretching and stabilizing ssDNA. DnaA-trio recognition is co-operative and depends on DnaA self-assembly. The ssDNA serves as an assembly region for the replication machinery. Tethered to DnaN (beta sliding clamp subunit of DNA polymerase) and thus replication forks by YabA. During replication initiation DnaA-ATP binds cooperatively to sequences in oriC. YabA prevents this cooperative binding while still allowing DnaA to bind DNA. During the cell cycle an initial phase occurs in which DnaA is associated with origin regions, then the origin regions become spatially separate from the centrally sequestered DnaA molecules, and most DnaA molecules are unable to reassociate with origin regions. Does not require YabA to bind DNA. During sporulation SirA prevents DnaA association with the replication origin to prevent excessive chromosome replication. Overexpression induces the SOS response; increasing expression of downstream dnaN blocks this induction. Over-initiation of DNA replication is very deleterious; isolated suppressors in relA, ndrR, dnaC, cshA and crrZ increase replication elongation, decrease replication inititation or lead to a decrease in the replicative DNA helicase. Binds acidic phospholipids. Functionally, the half-life of ADP-DnaA is 1.5 minutes, of ATP-DnaA is 5 minutes at 37 degrees Celsius; in E.coli the half-life of ADP-DnaA is about 45 minutes. In terms of biological role, also acts as a transcriptional regulator. DnaA inhibits its own gene expression. DnaA binds specifically to the promoter regions of at least 20 operons (56 genes), including itself, sda and dnaB, and probably controls their expression in response to DNA replication inhibition. The protein is Chromosomal replication initiator protein DnaA of Bacillus subtilis (strain 168).